The sequence spans 464 residues: ATP synthase subunit beta (464 aa).

153–160 (GGAGVGKT) serves as a coordination point for ATP.

Belongs to the ATPase alpha/beta chains family. F-type ATPases have 2 components, CF(1) - the catalytic core - and CF(0) - the membrane proton channel. CF(1) has five subunits: alpha(3), beta(3), gamma(1), delta(1), epsilon(1). CF(0) has three main subunits: a(1), b(2) and c(9-12). The alpha and beta chains form an alternating ring which encloses part of the gamma chain. CF(1) is attached to CF(0) by a central stalk formed by the gamma and epsilon chains, while a peripheral stalk is formed by the delta and b chains.

The protein resides in the cell inner membrane. The catalysed reaction is ATP + H2O + 4 H(+)(in) = ADP + phosphate + 5 H(+)(out). In terms of biological role, produces ATP from ADP in the presence of a proton gradient across the membrane. The catalytic sites are hosted primarily by the beta subunits. The protein is ATP synthase subunit beta of Burkholderia ambifaria (strain MC40-6).